The following is a 398-amino-acid chain: Argininosuccinate synthase (398 aa).

Residues 9 to 17 (AYSGGLDTS) and A36 contribute to the ATP site. Residues Y87 and S92 each contribute to the L-citrulline site. G117 contacts ATP. 3 residues coordinate L-aspartate: T119, N123, and D124. An L-citrulline-binding site is contributed by N123. 5 residues coordinate L-citrulline: R127, S176, S185, E261, and Y273.

This sequence belongs to the argininosuccinate synthase family. Type 1 subfamily. In terms of assembly, homotetramer.

It is found in the cytoplasm. The catalysed reaction is L-citrulline + L-aspartate + ATP = 2-(N(omega)-L-arginino)succinate + AMP + diphosphate + H(+). Its pathway is amino-acid biosynthesis; L-arginine biosynthesis; L-arginine from L-ornithine and carbamoyl phosphate: step 2/3. The polypeptide is Argininosuccinate synthase (Desulfotalea psychrophila (strain LSv54 / DSM 12343)).